A 258-amino-acid polypeptide reads, in one-letter code: F-box/LRR-repeat protein 25 (258 aa).

One can recognise an F-box domain in the interval 27 to 76; it reads SDSISNLPDEILHHILSFIPETNLVIRTSVLSKRWRHVWSKTPHLSFEWL. 4 LRR repeats span residues 101–130, 136–161, 177–202, and 224–249; these read CTSYSYEAGHVHSSIEFAMSHNVDNLSLAF, CNKFPDFFYTSSSLKRVELRSASLTP, RCNLSDKSFLKILSGCPILESLSLKF, and RRSCFREPMQSMQIVAPHIHYLRLRD.

The polypeptide is F-box/LRR-repeat protein 25 (FBL25) (Arabidopsis thaliana (Mouse-ear cress)).